The chain runs to 152 residues: MTITDLVLILFIAALLAFAIYDQFIMPRRNGPTLLAIPLLRRGRIDSVIFVGLIVILIYNNVTNHGALITTWLLSALALMGFYIFWIRVPKIIFKQKGFFFANVWIEYSRIKAMNLSEDGVLVMQLEQRRLLIRVRNIDDLEKVYKLLVSTQ.

3 helical membrane passes run 6–26 (LVLILFIAALLAFAIYDQFIM), 45–65 (IDSVIFVGLIVILIYNNVTNH), and 67–87 (ALITTWLLSALALMGFYIFWI).

It belongs to the UPF0266 family.

It is found in the cell inner membrane. In Escherichia coli O45:K1 (strain S88 / ExPEC), this protein is UPF0266 membrane protein YobD.